The chain runs to 87 residues: MYCLQWLLPVLLIPKPLNPALWFSHSVFMGFYLLSFLLERKPCTICALVFLGALFLICYSCWGNCFLYHCSASELPEAAYDPAVVGT.

2 consecutive transmembrane segments (helical) span residues 19–39 and 43–63; these read PALWFSHSVFMGFYLLSFLLE and CTICALVFLGALFLICYSCWG.

Belongs to the BLCAP family.

It localises to the cytoplasm. It is found in the nucleus. Its subcellular location is the membrane. Its function is as follows. Acts as a tumor suppressor; induces growth arrest at G(1)/S checkpoint and apoptosis via RB1-dependent and p53/TP53- and NF-kappa-B-independent mechanisms. Modulates expression of genes involved in the regulation of proliferation, cell cycle and apoptosis. In Xenopus laevis (African clawed frog), this protein is Apoptosis inducing factor BLCAP B (blcap-b).